We begin with the raw amino-acid sequence, 277 residues long: Phosphate import ATP-binding protein PstB 2 (277 aa).

The ABC transporter domain occupies 31–272 (IEVPGLNLFY…PAKKQTEDYI (242 aa)). Residue 63–70 (GPSGCGKS) participates in ATP binding.

This sequence belongs to the ABC transporter superfamily. Phosphate importer (TC 3.A.1.7) family. The complex is composed of two ATP-binding proteins (PstB), two transmembrane proteins (PstC and PstA) and a solute-binding protein (PstS).

Its subcellular location is the cell inner membrane. The enzyme catalyses phosphate(out) + ATP + H2O = ADP + 2 phosphate(in) + H(+). Functionally, part of the ABC transporter complex PstSACB involved in phosphate import. Responsible for energy coupling to the transport system. The protein is Phosphate import ATP-binding protein PstB 2 of Pseudomonas savastanoi pv. phaseolicola (strain 1448A / Race 6) (Pseudomonas syringae pv. phaseolicola (strain 1448A / Race 6)).